We begin with the raw amino-acid sequence, 302 residues long: Serine/threonine-protein phosphatase alpha-3 isoform (302 aa).

4 residues coordinate Mn(2+): D62, H64, D90, and N122. H123 acts as the Proton donor in catalysis. Positions 171 and 246 each coordinate Mn(2+).

Belongs to the PPP phosphatase family. PP-1 subfamily. In terms of assembly, interacts with Nop17l. Mn(2+) serves as cofactor.

It carries out the reaction O-phospho-L-seryl-[protein] + H2O = L-seryl-[protein] + phosphate. It catalyses the reaction O-phospho-L-threonyl-[protein] + H2O = L-threonyl-[protein] + phosphate. The polypeptide is Serine/threonine-protein phosphatase alpha-3 isoform (Pp1-13C) (Drosophila melanogaster (Fruit fly)).